The following is a 271-amino-acid chain: Neurexophilin-1 (271 aa).

The signal sequence occupies residues 1–21 (MQAACWYVLLLLQPTVYLVTC). Residues 22–97 (ANLTNGGKSE…WDWLRNSTDL (76 aa)) form an II region. N-linked (GlcNAc...) asparagine glycans are attached at residues asparagine 23, asparagine 68, asparagine 93, asparagine 146, asparagine 156, and asparagine 162. The tract at residues 98–176 (QEPRPRAKRR…LVPPTKIVEF (79 aa)) is III. Residues 177 to 185 (DLAQQTVID) are IV (linker domain). Residues 186 to 271 (AKDSKSFNCR…HSDTPYFPSG (86 aa)) form a v (Cys-rich) region.

The protein belongs to the neurexophilin family. May be proteolytically processed at the boundary between the N-terminal non-conserved and the central conserved domain in neuron-like cells. In terms of tissue distribution, highest level in brain.

It is found in the secreted. Functionally, may be signaling molecules that resemble neuropeptides. Ligand for alpha-neurexins. This Rattus norvegicus (Rat) protein is Neurexophilin-1 (Nxph1).